A 333-amino-acid chain; its full sequence is Glycerol-3-phosphate dehydrogenase [NAD(P)+] (333 aa).

Residues tryptophan 13, lysine 33, and lysine 108 each contribute to the NADPH site. Lysine 108 and glycine 138 together coordinate sn-glycerol 3-phosphate. Serine 142 contacts NADPH. Residues lysine 193, aspartate 246, serine 256, arginine 257, and asparagine 258 each contribute to the sn-glycerol 3-phosphate site. Lysine 193 (proton acceptor) is an active-site residue. Residue arginine 257 coordinates NADPH. Residues valine 281 and glutamate 283 each contribute to the NADPH site.

The protein belongs to the NAD-dependent glycerol-3-phosphate dehydrogenase family.

Its subcellular location is the cytoplasm. The enzyme catalyses sn-glycerol 3-phosphate + NAD(+) = dihydroxyacetone phosphate + NADH + H(+). It catalyses the reaction sn-glycerol 3-phosphate + NADP(+) = dihydroxyacetone phosphate + NADPH + H(+). Its pathway is membrane lipid metabolism; glycerophospholipid metabolism. Functionally, catalyzes the reduction of the glycolytic intermediate dihydroxyacetone phosphate (DHAP) to sn-glycerol 3-phosphate (G3P), the key precursor for phospholipid synthesis. The polypeptide is Glycerol-3-phosphate dehydrogenase [NAD(P)+] (Bifidobacterium longum subsp. infantis (strain ATCC 15697 / DSM 20088 / JCM 1222 / NCTC 11817 / S12)).